A 122-amino-acid polypeptide reads, in one-letter code: Large ribosomal subunit protein uL18 (122 aa).

The protein belongs to the universal ribosomal protein uL18 family. Part of the 50S ribosomal subunit; part of the 5S rRNA/L5/L18/L25 subcomplex. Contacts the 5S and 23S rRNAs.

Functionally, this is one of the proteins that bind and probably mediate the attachment of the 5S RNA into the large ribosomal subunit, where it forms part of the central protuberance. In Thermotoga petrophila (strain ATCC BAA-488 / DSM 13995 / JCM 10881 / RKU-1), this protein is Large ribosomal subunit protein uL18.